We begin with the raw amino-acid sequence, 509 residues long: Ribonuclease Y (509 aa).

A helical transmembrane segment spans residues 5-25; it reads IIILLSVFCGIFFICFIICSS. Positions 199-259 constitute a KH domain; it reads TTNIVKLPSD…IRREIATRTL (61 aa). Residues 325–418 form the HD domain; that stretch reads VLAHSIEVAK…VAIADSISAS (94 aa).

This sequence belongs to the RNase Y family.

Its subcellular location is the cell membrane. In terms of biological role, endoribonuclease that initiates mRNA decay. The polypeptide is Ribonuclease Y (Mycoplasma capricolum subsp. capricolum (strain California kid / ATCC 27343 / NCTC 10154)).